The primary structure comprises 69 residues: Putative antitoxin AF_1481 (69 aa).

Belongs to the UPF0330 family.

Its function is as follows. Possibly the antitoxin component of a type II toxin-antitoxin (TA) system. The chain is Putative antitoxin AF_1481 from Archaeoglobus fulgidus (strain ATCC 49558 / DSM 4304 / JCM 9628 / NBRC 100126 / VC-16).